We begin with the raw amino-acid sequence, 185 residues long: ATP synthase subunit b, chloroplastic (185 aa).

Residues 31–49 (LINSGVVLGLPVYSGKGVL) traverse the membrane as a helical segment.

The protein belongs to the ATPase B chain family. As to quaternary structure, F-type ATPases have 2 components, F(1) - the catalytic core - and F(0) - the membrane proton channel. F(1) has five subunits: alpha(3), beta(3), gamma(1), delta(1), epsilon(1). F(0) has four main subunits: a(1), b(1), b'(1) and c(10-14). The alpha and beta chains form an alternating ring which encloses part of the gamma chain. F(1) is attached to F(0) by a central stalk formed by the gamma and epsilon chains, while a peripheral stalk is formed by the delta, b and b' chains.

Its subcellular location is the plastid. It localises to the chloroplast thylakoid membrane. In terms of biological role, f(1)F(0) ATP synthase produces ATP from ADP in the presence of a proton or sodium gradient. F-type ATPases consist of two structural domains, F(1) containing the extramembraneous catalytic core and F(0) containing the membrane proton channel, linked together by a central stalk and a peripheral stalk. During catalysis, ATP synthesis in the catalytic domain of F(1) is coupled via a rotary mechanism of the central stalk subunits to proton translocation. Functionally, component of the F(0) channel, it forms part of the peripheral stalk, linking F(1) to F(0). This Huperzia lucidula (Shining clubmoss) protein is ATP synthase subunit b, chloroplastic.